A 252-amino-acid polypeptide reads, in one-letter code: Flap endonuclease Xni (252 aa).

Mg(2+) is bound at residue Asp-105. A 5'-3' exonuclease domain is found at 162 to 250 (ERTQFIDYLA…LNANLSQFRL (89 aa)). K(+) contacts are provided by Leu-172, Ala-173, Pro-181, Val-183, and Ile-186. Positions 185-190 (GIGPKS) are interaction with DNA.

It belongs to the Xni family. It depends on Mg(2+) as a cofactor. K(+) is required as a cofactor.

Functionally, has flap endonuclease activity. During DNA replication, flap endonucleases cleave the 5'-overhanging flap structure that is generated by displacement synthesis when DNA polymerase encounters the 5'-end of a downstream Okazaki fragment. The sequence is that of Flap endonuclease Xni from Shewanella woodyi (strain ATCC 51908 / MS32).